A 107-amino-acid polypeptide reads, in one-letter code: EPIDERMAL PATTERNING FACTOR-like protein 3 (107 aa).

An N-terminal signal peptide occupies residues 1–24 (MEYMFLLMSKFFFVFPIIIYIGPA). Cystine bridges form between Cys-64–Cys-102, Cys-68–Cys-74, and Cys-71–Cys-104.

It belongs to the plant cysteine rich small secretory peptide family. Epidermal patterning factor subfamily.

The protein localises to the secreted. Functionally, controls stomatal patterning. The polypeptide is EPIDERMAL PATTERNING FACTOR-like protein 3 (Arabidopsis thaliana (Mouse-ear cress)).